The sequence spans 100 residues: Urease subunit gamma (100 aa).

It belongs to the urease gamma subunit family. In terms of assembly, heterotrimer of UreA (gamma), UreB (beta) and UreC (alpha) subunits. Three heterotrimers associate to form the active enzyme.

It localises to the cytoplasm. The catalysed reaction is urea + 2 H2O + H(+) = hydrogencarbonate + 2 NH4(+). It participates in nitrogen metabolism; urea degradation; CO(2) and NH(3) from urea (urease route): step 1/1. The protein is Urease subunit gamma of Mycobacterium sp. (strain JLS).